Reading from the N-terminus, the 151-residue chain is Late embryogenesis abundant protein Lea14-A (151 aa).

This sequence belongs to the LEA type 2 family.

In Gossypium hirsutum (Upland cotton), this protein is Late embryogenesis abundant protein Lea14-A (LEA14-A).